The primary structure comprises 734 residues: Photosystem I P700 chlorophyll a apoprotein A2 (734 aa).

8 consecutive transmembrane segments (helical) span residues 46–69 (IFAS…FHVA), 135–158 (LYAG…LHLQ), 175–199 (LNHH…HVAI), 273–291 (IAHH…GHMY), 330–353 (LHFQ…QHMY), 369–395 (SALY…IFFV), 417–439 (AIIS…IYVH), and 517–535 (FLIH…LILV). 2 residues coordinate [4Fe-4S] cluster: C559 and C568. 2 consecutive transmembrane segments (helical) span residues 575–596 (AFYL…YWHW) and 643–665 (LSVW…MFLI). Positions 654, 662, and 670 each coordinate chlorophyll a. W671 contacts phylloquinone. A helical membrane pass occupies residues 707–727 (LVGLIHFTAGYIFTYAAFVIA).

It belongs to the PsaA/PsaB family. As to quaternary structure, the PsaA/B heterodimer binds the P700 chlorophyll special pair and subsequent electron acceptors. PSI consists of a core antenna complex that captures photons, and an electron transfer chain that converts photonic excitation into a charge separation. The eukaryotic PSI reaction center is composed of at least 11 subunits. P700 is a chlorophyll a/chlorophyll a' dimer, A0 is one or more chlorophyll a, A1 is one or both phylloquinones and FX is a shared 4Fe-4S iron-sulfur center. serves as cofactor.

Its subcellular location is the plastid. It is found in the chloroplast thylakoid membrane. It carries out the reaction reduced [plastocyanin] + hnu + oxidized [2Fe-2S]-[ferredoxin] = oxidized [plastocyanin] + reduced [2Fe-2S]-[ferredoxin]. In terms of biological role, psaA and PsaB bind P700, the primary electron donor of photosystem I (PSI), as well as the electron acceptors A0, A1 and FX. PSI is a plastocyanin/cytochrome c6-ferredoxin oxidoreductase, converting photonic excitation into a charge separation, which transfers an electron from the donor P700 chlorophyll pair to the spectroscopically characterized acceptors A0, A1, FX, FA and FB in turn. Oxidized P700 is reduced on the lumenal side of the thylakoid membrane by plastocyanin or cytochrome c6. The sequence is that of Photosystem I P700 chlorophyll a apoprotein A2 from Rhodomonas salina (Cryptomonas salina).